The sequence spans 246 residues: Ribonuclease 3 (246 aa).

The region spanning I30 to G152 is the RNase III domain. Residue E65 participates in Mg(2+) binding. The active site involves D69. Residues D138 and E141 each contribute to the Mg(2+) site. E141 is a catalytic residue. The region spanning H177–Q246 is the DRBM domain.

It belongs to the ribonuclease III family. Homodimer. Requires Mg(2+) as cofactor.

It localises to the cytoplasm. The catalysed reaction is Endonucleolytic cleavage to 5'-phosphomonoester.. Functionally, digests double-stranded RNA. Involved in the processing of primary rRNA transcript to yield the immediate precursors to the large and small rRNAs (23S and 16S). Processes some mRNAs, and tRNAs when they are encoded in the rRNA operon. Processes pre-crRNA and tracrRNA of type II CRISPR loci if present in the organism. The polypeptide is Ribonuclease 3 (Zymomonas mobilis subsp. mobilis (strain ATCC 31821 / ZM4 / CP4)).